We begin with the raw amino-acid sequence, 306 residues long: Pantothenate kinase (306 aa).

Residue 90 to 97 (GSVAVGKS) participates in ATP binding.

It belongs to the prokaryotic pantothenate kinase family.

The protein resides in the cytoplasm. It catalyses the reaction (R)-pantothenate + ATP = (R)-4'-phosphopantothenate + ADP + H(+). It functions in the pathway cofactor biosynthesis; coenzyme A biosynthesis; CoA from (R)-pantothenate: step 1/5. This is Pantothenate kinase from Listeria welshimeri serovar 6b (strain ATCC 35897 / DSM 20650 / CCUG 15529 / CIP 8149 / NCTC 11857 / SLCC 5334 / V8).